The sequence spans 61 residues: Large ribosomal subunit protein eL37 (61 aa).

Cys20, Cys23, Cys35, and Cys38 together coordinate Zn(2+). A C4-type zinc finger spans residues 20–38; the sequence is CRRCGRRAYHVRKKRCAAC.

It belongs to the eukaryotic ribosomal protein eL37 family. It depends on Zn(2+) as a cofactor.

In terms of biological role, binds to the 23S rRNA. The sequence is that of Large ribosomal subunit protein eL37 (rpl37e) from Methanocaldococcus jannaschii (strain ATCC 43067 / DSM 2661 / JAL-1 / JCM 10045 / NBRC 100440) (Methanococcus jannaschii).